The primary structure comprises 202 residues: CASP-like protein 2B1 (202 aa).

Topologically, residues 1 to 29 are cytoplasmic; it reads MSYLGVGVSPGNVPVYHGTNSKVIDRRVR. Residues 30–50 traverse the membrane as a helical segment; the sequence is LAELVLRCVICCLGVLAAVLV. Residues 51–72 lie on the Extracellular side of the membrane; it reads GTDTQVKEIFSIQKKARFTDMK. The chain crosses the membrane as a helical span at residues 73–93; the sequence is ALVFLVAANGIAAAYSFVQGV. The Cytoplasmic segment spans residues 94–109; the sequence is RCVVGMVKGSVLFSKP. Residues 110–132 traverse the membrane as a helical segment; that stretch reads LAWVIFSGDQMMAYLTMSAVAAA. Residues 133 to 164 are Extracellular-facing; that stretch reads AQSSVFAKLGQPDLQWMKICTMYGKFCNQVGE. Residues 165 to 185 form a helical membrane-spanning segment; sequence GIASALLVSVSMVVLSCISAF. At 186-202 the chain is on the cytoplasmic side; the sequence is SLFRLYGGNKGKDGARW.

This sequence belongs to the Casparian strip membrane proteins (CASP) family. As to quaternary structure, homodimer and heterodimers.

The protein localises to the cell membrane. This chain is CASP-like protein 2B1, found in Populus trichocarpa (Western balsam poplar).